Reading from the N-terminus, the 554-residue chain is CTP synthase (554 aa).

The tract at residues 1-279 is amidoligase domain; that stretch reads MSQPRAEHVT…DAFLIRRLDL (279 aa). CTP is bound at residue S21. S21 is a UTP binding site. ATP-binding positions include 22 to 27 and D79; that span reads SLGKGL. The Mg(2+) site is built by D79 and E153. CTP is bound by residues 160 to 162, 200 to 205, and K236; these read DIE and KTKPTQ. UTP is bound by residues 200-205 and K236; that span reads KTKPTQ. Residues 304–551 enclose the Glutamine amidotransferase type-1 domain; the sequence is TVALVGKYID…VKAGLKHKND (248 aa). G367 is an L-glutamine binding site. The active-site Nucleophile; for glutamine hydrolysis is the C394. Residues 395–398, E417, and R478 contribute to the L-glutamine site; that span reads LGLQ. Catalysis depends on residues H524 and E526.

Belongs to the CTP synthase family. As to quaternary structure, homotetramer.

It carries out the reaction UTP + L-glutamine + ATP + H2O = CTP + L-glutamate + ADP + phosphate + 2 H(+). The catalysed reaction is L-glutamine + H2O = L-glutamate + NH4(+). It catalyses the reaction UTP + NH4(+) + ATP = CTP + ADP + phosphate + 2 H(+). Its pathway is pyrimidine metabolism; CTP biosynthesis via de novo pathway; CTP from UDP: step 2/2. Its activity is regulated as follows. Allosterically activated by GTP, when glutamine is the substrate; GTP has no effect on the reaction when ammonia is the substrate. The allosteric effector GTP functions by stabilizing the protein conformation that binds the tetrahedral intermediate(s) formed during glutamine hydrolysis. Inhibited by the product CTP, via allosteric rather than competitive inhibition. Functionally, catalyzes the ATP-dependent amination of UTP to CTP with either L-glutamine or ammonia as the source of nitrogen. Regulates intracellular CTP levels through interactions with the four ribonucleotide triphosphates. This is CTP synthase from Corynebacterium kroppenstedtii (strain DSM 44385 / JCM 11950 / CIP 105744 / CCUG 35717).